The sequence spans 118 residues: MYKTTGLTHLINSTKYSLQGLKSAFKNETAFRHECFLACILIPLTFFLGETKIEIILMISSVLLVMALELLNSAVETVVDRIGTERHELSGRAKDQGSASVFIALCIVGIVWGGILFF.

A divalent metal cation is bound at residue Glu-28. 2 helical membrane-spanning segments follow: residues 29 to 49 (TAFR…FFLG) and 55 to 75 (IILM…NSAV). Glu-69 serves as the catalytic Proton acceptor. Position 76 (Glu-76) interacts with a divalent metal cation. Residues 98–118 (SASVFIALCIVGIVWGGILFF) form a helical membrane-spanning segment.

This sequence belongs to the bacterial diacylglycerol kinase family. Mg(2+) is required as a cofactor.

It is found in the cell inner membrane. It carries out the reaction a 1,2-diacyl-sn-glycerol + ATP = a 1,2-diacyl-sn-glycero-3-phosphate + ADP + H(+). Its function is as follows. Catalyzes the ATP-dependent phosphorylation of sn-l,2-diacylglycerol (DAG) to phosphatidic acid. Involved in the recycling of diacylglycerol produced as a by-product during membrane-derived oligosaccharide (MDO) biosynthesis. The protein is Diacylglycerol kinase (dgkA) of Haemophilus influenzae (strain ATCC 51907 / DSM 11121 / KW20 / Rd).